A 197-amino-acid polypeptide reads, in one-letter code: CASP-like protein 1B1 (197 aa).

Position 2 is an N-acetylalanine (Ala-2). Over Ala-2–Lys-17 the chain is Cytoplasmic. A helical transmembrane segment spans residues Ile-18 to Gly-38. Over Leu-39–Ala-69 the chain is Extracellular. A helical membrane pass occupies residues Phe-70–Leu-90. The Cytoplasmic segment spans residues Gln-91–Ser-106. The helical transmembrane segment at Val-107 to Phe-127 threads the bilayer. Over Met-128–Ala-156 the chain is Extracellular. A helical transmembrane segment spans residues Gly-157–Ile-177. Residues Ser-178–Pro-197 lie on the Cytoplasmic side of the membrane.

The protein belongs to the Casparian strip membrane proteins (CASP) family. Homodimer and heterodimers.

The protein localises to the cell membrane. This Arabidopsis thaliana (Mouse-ear cress) protein is CASP-like protein 1B1.